The sequence spans 224 residues: 7-cyano-7-deazaguanine synthase (224 aa).

Position 12-22 (12-22) interacts with ATP; that stretch reads LSGGLDSSTVT. C193, C201, C204, and C207 together coordinate Zn(2+).

It belongs to the QueC family. Requires Zn(2+) as cofactor.

It catalyses the reaction 7-carboxy-7-deazaguanine + NH4(+) + ATP = 7-cyano-7-deazaguanine + ADP + phosphate + H2O + H(+). It participates in purine metabolism; 7-cyano-7-deazaguanine biosynthesis. Functionally, catalyzes the ATP-dependent conversion of 7-carboxy-7-deazaguanine (CDG) to 7-cyano-7-deazaguanine (preQ(0)). The protein is 7-cyano-7-deazaguanine synthase of Prochlorococcus marinus (strain MIT 9301).